We begin with the raw amino-acid sequence, 327 residues long: WRKY transcription factor WRKY76 (327 aa).

Residues 56–76 (AKIVEAKVTQMSEENRRLTEV) are a coiled coil. The interval 87–135 (RLGLDGSASPPRPVSPLSGKKRSRESMETANSCDANSNRHQGGDADHAE) is disordered. The short motif at 106-112 (KKRSRES) is the Nuclear localization signal element. The segment covering 114-126 (ETANSCDANSNRH) has biased composition (polar residues). The segment at residues 160–226 (DTSLVVKDGY…YEGEHNHPHP (67 aa)) is a DNA-binding region (WRKY).

It belongs to the WRKY group II-a family.

The protein localises to the nucleus. Transcription repressor. Interacts specifically with the W box (5'-(T)TGAC[CT]-3'), a frequently occurring elicitor-responsive cis-acting element. Regulates, probably indirectly, the activation of defense-related genes during defense response. Modulates plant innate immunity against X.oryzae pv. oryzae (Xoo). The polypeptide is WRKY transcription factor WRKY76 (Oryza sativa subsp. japonica (Rice)).